A 150-amino-acid chain; its full sequence is Large ribosomal subunit protein bL9 (150 aa).

This sequence belongs to the bacterial ribosomal protein bL9 family.

Binds to the 23S rRNA. The chain is Large ribosomal subunit protein bL9 from Pectobacterium carotovorum subsp. carotovorum (strain PC1).